The primary structure comprises 272 residues: Ribonuclease HII (272 aa).

One can recognise an RNase H type-2 domain in the interval 87–272 (KYVAGVDEVG…HRMSFLKNIL (186 aa)). A divalent metal cation contacts are provided by Asp93, Glu94, and Asp188.

Belongs to the RNase HII family. The cofactor is Mn(2+). It depends on Mg(2+) as a cofactor.

The protein localises to the cytoplasm. The enzyme catalyses Endonucleolytic cleavage to 5'-phosphomonoester.. Its function is as follows. Endonuclease that specifically degrades the RNA of RNA-DNA hybrids. This chain is Ribonuclease HII, found in Clostridium perfringens (strain ATCC 13124 / DSM 756 / JCM 1290 / NCIMB 6125 / NCTC 8237 / Type A).